A 148-amino-acid polypeptide reads, in one-letter code: 3-dehydroquinate dehydratase (148 aa).

The active-site Proton acceptor is Y22. The substrate site is built by N73, H79, and D86. H99 acts as the Proton donor in catalysis. Residues 100–101 (LS) and R110 each bind substrate.

Belongs to the type-II 3-dehydroquinase family. In terms of assembly, homododecamer.

It catalyses the reaction 3-dehydroquinate = 3-dehydroshikimate + H2O. It participates in metabolic intermediate biosynthesis; chorismate biosynthesis; chorismate from D-erythrose 4-phosphate and phosphoenolpyruvate: step 3/7. In terms of biological role, catalyzes a trans-dehydration via an enolate intermediate. In Jannaschia sp. (strain CCS1), this protein is 3-dehydroquinate dehydratase.